We begin with the raw amino-acid sequence, 311 residues long: Malate dehydrogenase (311 aa).

Residues 7 to 13 (GAAGGIG) and aspartate 34 each bind NAD(+). The substrate site is built by arginine 81 and arginine 87. Residues asparagine 94 and 117 to 119 (ITN) contribute to the NAD(+) site. Positions 119 and 153 each coordinate substrate. Catalysis depends on histidine 177, which acts as the Proton acceptor. Methionine 227 contacts NAD(+).

Belongs to the LDH/MDH superfamily. MDH type 1 family. In terms of assembly, homodimer.

It carries out the reaction (S)-malate + NAD(+) = oxaloacetate + NADH + H(+). Functionally, catalyzes the reversible oxidation of malate to oxaloacetate. The chain is Malate dehydrogenase from Shewanella baltica (strain OS155 / ATCC BAA-1091).